The primary structure comprises 804 residues: Chondroitin sulfate synthase mig-22 (804 aa).

Residues 1-6 (MVGGGR) lie on the Cytoplasmic side of the membrane. The helical; Signal-anchor for type II membrane protein transmembrane segment at 7–27 (TGIHLLLGFLIGAALALFFFS) threads the bilayer. The Lumenal segment spans residues 28-804 (STPSIDLTSS…QLAKLLFHEK (777 aa)). N-linked (GlcNAc...) asparagine glycans are attached at residues Asn-123, Asn-172, and Asn-268.

Belongs to the chondroitin N-acetylgalactosaminyltransferase family. As to quaternary structure, interacts with sqv-5. The cofactor is a divalent metal cation. In terms of tissue distribution, expressed in seam cells, the vulval epithelium and in oocytes (at protein level).

It localises to the golgi apparatus. The protein resides in the golgi stack membrane. The enzyme catalyses 3-O-(beta-D-GlcA-(1-&gt;3)-beta-D-GalNAc-(1-&gt;4)-beta-D-GlcA-(1-&gt;3)-beta-D-Gal-(1-&gt;3)-beta-D-Gal-(1-&gt;4)-beta-D-Xyl)-L-seryl-[protein] + UDP-N-acetyl-alpha-D-galactosamine = 3-O-(beta-D-GalNAc-(1-&gt;4)-beta-D-GlcA-(1-&gt;3)-beta-D-GalNAc-(1-&gt;4)-beta-D-GlcA-(1-&gt;3)-beta-D-Gal-(1-&gt;3)-beta-D-Gal-(1-&gt;4)-beta-D-Xyl)-L-seryl-[protein] + UDP + H(+). It catalyses the reaction 3-O-{beta-D-GlcA-(1-&gt;3)-[beta-D-GalNAc-(1-&gt;4)-beta-D-GlcA-(1-&gt;3)](n)-beta-D-GalNAc-(1-&gt;4)-beta-D-GlcA-(1-&gt;3)-beta-D-Gal-(1-&gt;3)-beta-D-Gal-(1-&gt;4)-beta-D-Xyl}-L-seryl-[protein] + UDP-N-acetyl-alpha-D-galactosamine = 3-O-{[beta-D-GalNAc-(1-&gt;4)-beta-D-GlcA-(1-&gt;3)](n+1)-beta-D-GalNAc-(1-&gt;4)-beta-D-GlcA-(1-&gt;3)-beta-D-Gal-(1-&gt;3)-beta-D-Gal-(1-&gt;4)-beta-D-Xyl}-L-seryl-[protein] + UDP + H(+). The catalysed reaction is 3-O-(beta-D-GalNAc-(1-&gt;4)-beta-D-GlcA-(1-&gt;3)-beta-D-Gal-(1-&gt;3)-beta-D-Gal-(1-&gt;4)-beta-D-Xyl)-L-seryl-[protein] + UDP-alpha-D-glucuronate = 3-O-(beta-D-GlcA-(1-&gt;3)-beta-D-GalNAc-(1-&gt;4)-beta-D-GlcA-(1-&gt;3)-beta-D-Gal-(1-&gt;3)-beta-D-Gal-(1-&gt;4)-beta-D-Xyl)-L-seryl-[protein] + UDP + H(+). It carries out the reaction 3-O-{[beta-D-GalNAc-(1-&gt;4)-beta-D-GlcA-(1-&gt;3)](n)-beta-D-GalNAc-(1-&gt;4)-beta-D-GlcA-(1-&gt;3)-beta-D-Gal-(1-&gt;3)-beta-D-Gal-(1-&gt;4)-beta-D-Xyl}-L-seryl-[protein] + UDP-alpha-D-glucuronate = 3-O-{beta-D-GlcA-(1-&gt;3)-[beta-D-GalNAc-(1-&gt;4)-beta-D-GlcA-(1-&gt;3)](n)-beta-D-GalNAc-(1-&gt;4)-beta-D-GlcA-(1-&gt;3)-beta-D-Gal-(1-&gt;3)-beta-D-Gal-(1-&gt;4)-beta-D-Xyl}-L-seryl-[protein] + UDP + H(+). Its function is as follows. Has both beta-1,3-glucuronic acid and beta-1,4-N-acetylgalactosamine transferase activity. Transfers glucuronic acid (GlcUA) from UDP-GlcUA and N-acetylgalactosamine (GalNAc) from UDP-GalNAc to the non-reducing end of the elongating chondroitin polymer. Required together with sqv-5 for the biosynthesis of chondroitin. Chondroitin is involved in organogenesis of the vulva, maturation of the gonad, and neural development. May have a specific role in unc-6/netrin-mediated dorsal guidance of gonadal distal tip cells. Glycosyltransferase activity is weak. In Caenorhabditis elegans, this protein is Chondroitin sulfate synthase mig-22 (mig-22).